The chain runs to 428 residues: Chaperone SurA (428 aa).

Positions 1-13 are cleaved as a signal peptide; it reads MLGALLLSGAVHA. PpiC domains lie at 164–265 and 276–375; these read SEEF…KLLE and RDEV…EVLG.

The protein resides in the periplasm. It catalyses the reaction [protein]-peptidylproline (omega=180) = [protein]-peptidylproline (omega=0). Its function is as follows. Chaperone involved in the correct folding and assembly of outer membrane proteins. Recognizes specific patterns of aromatic residues and the orientation of their side chains, which are found more frequently in integral outer membrane proteins. May act in both early periplasmic and late outer membrane-associated steps of protein maturation. In Pseudomonas savastanoi pv. phaseolicola (strain 1448A / Race 6) (Pseudomonas syringae pv. phaseolicola (strain 1448A / Race 6)), this protein is Chaperone SurA.